A 336-amino-acid polypeptide reads, in one-letter code: uncharacterized protein (336 aa).

This is an uncharacterized protein from Enterobacteria phage T4 (Bacteriophage T4).